Here is a 61-residue protein sequence, read N- to C-terminus: Small ribosomal subunit protein uS14 (61 aa).

Cys-24, Cys-27, Cys-40, and Cys-43 together coordinate Zn(2+).

Belongs to the universal ribosomal protein uS14 family. Zinc-binding uS14 subfamily. As to quaternary structure, part of the 30S ribosomal subunit. Contacts proteins S3 and S10. The cofactor is Zn(2+).

Its function is as follows. Binds 16S rRNA, required for the assembly of 30S particles and may also be responsible for determining the conformation of the 16S rRNA at the A site. The sequence is that of Small ribosomal subunit protein uS14 from Clostridium kluyveri (strain NBRC 12016).